We begin with the raw amino-acid sequence, 618 residues long: MELEDILNAREGDKLFLLGNEATVRAAIESGVGVASTYPGTPSSEIGNVLSGIAKRAGMYFEFSVNEKVALEVAAAAAASGVRSFTFMKHVGLNVASDSFMSTAYTGVRAGMVVLTADDPSMFSSQNEQDNRHYARLACLPLLEPSDPQEVLEFMNHAFELSEDYGLPVLLRTTTRVSHMRGVVEVGSRMREPSEGFFRKDPERFVPVPATARVMHRKLVDKMKELRIRADESELNRVFNGGSDSELGVVASGGAFNYVYDALESLGLELPVLKLGFTYPFPAGLVEEFLSGLKRVLVVEEVDPIMEREVLAVAGSARLDLDVHGKLDGTLPEIYEYNEDILRKAISGLTGAPSVERECDVPDIPERPPSLCPGCPHRAVYYAVRRAADELELSGDEIIFPTDIGCYTLGIEPPYSAADYLLSMGSSIGTSCGFSAATTQRIVSFIGDSTFFHAGIPPLINAVHNKQRFVLVVLDNRTTAMTGGQPHPGLPVDGMGDEAPEISIEEIVRASGVEFVETVNPMNIKRTSETVKRALEHESVAVVISKYPCMLSSGAVRGRPMAVDGEKCDLCLECIRDLACPAMVTREGEVFIDPLKCRGCSVCLQICPAGAIKPEGKG.

4Fe-4S ferredoxin-type domains follow at residues 558–587 (GRPM…VTRE) and 588–617 (GEVF…PEGK). C568, C571, C574, C580, C597, C600, C603, and C607 together coordinate [4Fe-4S] cluster.

As to quaternary structure, heterodimer of the IorA and IorB subunits. Requires [4Fe-4S] cluster as cofactor.

The enzyme catalyses indole-3-pyruvate + 2 oxidized [2Fe-2S]-[ferredoxin] + CoA = (indol-3-yl)acetyl-CoA + 2 reduced [2Fe-2S]-[ferredoxin] + CO2 + H(+). In terms of biological role, catalyzes the ferredoxin-dependent oxidative decarboxylation of arylpyruvates. In Methanothermobacter thermautotrophicus (strain ATCC 29096 / DSM 1053 / JCM 10044 / NBRC 100330 / Delta H) (Methanobacterium thermoautotrophicum), this protein is Indolepyruvate oxidoreductase subunit IorA (iorA).